The primary structure comprises 1444 residues: MYHNFDQLASCQESLFYSFSFLDPVDDAHTGHHIYACTSFGPDWGNLPANTTNLLLQSSDAPEPVNGTYQIGYWPAATGSSVLSSLVTLTNQLRQYLVRGLGSIDRPTILFARYGSTSVGLYIGQALDNRGIGENVLSSLSDSIASANASLAASVAMQFCEPGQTSHHVFGLIATGNGTFDSVQAALSSWSKAKCLTFPVVQNITGTLSLVKPLFNASYYATTVHPTRPPVSHATSTSSNATSVRGRALAPRTTCSTVQVVSGNCYDSLASECGITLAKFLQYNKVTDDDCSTLVIGEHFCCSAGQLPDFSPKPQSDGTCTTYTIKANDNCETIAASYSLTVDELENYNNDTWAWEGCNPLYVNNIICLSEGNAPMPASLANAECGPQVPGTLTPARGTNISTLNECPLNACCDVWGQCGTTSDFCINTGTGAPGTAKNGTNGCISNCGTAIVQSDKPATYRKVGFYEGFNLQRPCLYQDVSQIDLSAYTHIYFAFGALSSSYEVQIPNGTATGTTYEFDLFKQIVGTTRILSIGGWAFSTDPSTYMIFRDGVTSANRLTMATNIADFIKDHDLDGVNIDWEYPGASDIPGIPAASTDDGTNYLAFLAVLKNLLPDKEITIAAPASYWYLKGFPIKDMAELVDYVIYMTYDLHGQWDSHNQWSQEGCPTGACLRSDVNITETEGALSMITKAGVPSNQVVVGVTSYGRSFAMAEAGCYGPDCTYLGSADDSQATPGKCTQSAGYIANAEILAILANSSRVNENYIDIDSNTNILVYDDTQWVGWMSEGIKNSRKSVYQGLSMGGWTDWATDLQKFNDAPFTSTSWTKFTSDVILDVDPYVEGNRTGNWTSLTCSDAAVQDALYMPCSQRWSELDASNAWSDAINVWTTIDEPKLGNTEPGFTLSIMNTFHAGESMNCGSIAPNGACSTTETCAWFEGFGDSGESGPAAMLIYNSFTVINELTDKLVDQAYSQLWYAINGIAATYIDNQLSDFEDTFAPVPPAKSDEWLDILIDLLGLGLTAVAAPFFDGVFGALPALEALGEAGAQVAQDVTYSAIAYGVSIATSTLPSAAPGDWTAESQDSFSATMGSVLYGWSNATANQLYTLFNGSETSITLLTTLISDGKLIEGSGGAPSVGYQVSDSTSSDVEAFIGKAFFGYSIPTLWTISGSAAFVIDSGYPCSAQNPLTDYMTASTQESTYACYNDNLYYLVYPDGTEDGCSDQHEEKCVKKYFTAPPGLDTLSSTTWGGITLSELIEGSVNTYIANGNANGGPVADPMDALTLKDLSNQNITTPGYIRLPVCTAQVAWASWTNPAQSNSSASGYPCNPLQGVTKCSGYTYEDETTSASPSVSDCKTLMKNIAGTSGEWTTGIDGQRAIAKYGTCKFGVQNVGVTGDVTYNTGSQDIVNIVTEAISKYEWEGHVGAKGYMKCSGDAGSQKVEWGLY.

LysM domains lie at 256 to 302 (STVQ…HFCC) and 321 to 369 (TTYT…IICL). The Chitin-binding type-1 domain maps to 382-450 (NAECGPQVPG…TNGCISNCGT (69 aa)). 4 cysteine pairs are disulfide-bonded: C385-C413, C407-C419, C412-C426, and C444-C448. The region spanning 461 to 831 (YRKVGFYEGF…STSWTKFTSD (371 aa)) is the GH18 domain. The active-site Proton donor is the E582. The chitin site is built by Y583 and W808.

Belongs to the glycosyl hydrolase 18 family. Chitinase class V subfamily.

The catalysed reaction is Random endo-hydrolysis of N-acetyl-beta-D-glucosaminide (1-&gt;4)-beta-linkages in chitin and chitodextrins.. Probable chitinase involved in the degradation of chitin, a component of the cell walls of fungi and exoskeletal elements of some animals (including worms and arthropods). Might be involved in manipulation of host defenses for successful infection. In Penicillium expansum (Blue mold rot fungus), this protein is Probable chitinase LysM18.